Reading from the N-terminus, the 473-residue chain is MKLSMPRFDQAPVLVVGDVMLDRYWHGGTSRISPEAPVPVVKVDQIEDRPGGAANVALNIAALGAPAALIGVTGQDEAADSLANSLQAAGVRSVFQRIAHQPTIVKLRVMSRHQQLLRIDFEEPFATDPLSLGAEVESLLEGVKVLVLSDYGKGALKNHQSLIQAARAKGIPVLADPKGKDFSIYRGASLITPNLSEFETIVGRCADEAELVAKGLQLLLDLDLGALLVTRGEHGMTLLRTGQPALHLPARAREVFDVTGAGDTVISTLAAAIAAGEDLPHAVGLANLAAGIVVGKLGTAAISAPELRRAIQREEGSERGVLGLEQLLLAIDDARAHNEKIVFTNGCFDILHAGHVTYLEQARAQGDRLIVAVNDDASVSRLKGPGRPINSVDRRMAVLAGLGAVDWVISFPEGTPENLLSQVKPDVLVKGGDYGIDQVVGADIVKGYGGTVKVLGLVENSSTTAIVEKIRKN.

The interval 1 to 317 (MKLSMPRFDQ…RRAIQREEGS (317 aa)) is ribokinase. 194-197 (NLSE) is a binding site for ATP. Asp-263 is a catalytic residue. Residues 343–473 (FTNGCFDILH…TAIVEKIRKN (131 aa)) are cytidylyltransferase.

In the N-terminal section; belongs to the carbohydrate kinase PfkB family. It in the C-terminal section; belongs to the cytidylyltransferase family. Homodimer.

The enzyme catalyses D-glycero-beta-D-manno-heptose 7-phosphate + ATP = D-glycero-beta-D-manno-heptose 1,7-bisphosphate + ADP + H(+). It carries out the reaction D-glycero-beta-D-manno-heptose 1-phosphate + ATP + H(+) = ADP-D-glycero-beta-D-manno-heptose + diphosphate. The protein operates within nucleotide-sugar biosynthesis; ADP-L-glycero-beta-D-manno-heptose biosynthesis; ADP-L-glycero-beta-D-manno-heptose from D-glycero-beta-D-manno-heptose 7-phosphate: step 1/4. Its pathway is nucleotide-sugar biosynthesis; ADP-L-glycero-beta-D-manno-heptose biosynthesis; ADP-L-glycero-beta-D-manno-heptose from D-glycero-beta-D-manno-heptose 7-phosphate: step 3/4. Functionally, catalyzes the phosphorylation of D-glycero-D-manno-heptose 7-phosphate at the C-1 position to selectively form D-glycero-beta-D-manno-heptose-1,7-bisphosphate. Its function is as follows. Catalyzes the ADP transfer from ATP to D-glycero-beta-D-manno-heptose 1-phosphate, yielding ADP-D-glycero-beta-D-manno-heptose. This Pseudomonas putida (strain W619) protein is Bifunctional protein HldE.